Reading from the N-terminus, the 59-residue chain is Single-pass membrane and coiled-coil domain-containing protein 4 (59 aa).

The interval 1-27 is disordered; that stretch reads MRQLKGKPKKETSRDKKERKQAMQEAR. Residues 9 to 27 show a composition bias toward basic and acidic residues; the sequence is KKETSRDKKERKQAMQEAR. The stretch at 9–31 forms a coiled coil; that stretch reads KKETSRDKKERKQAMQEARRQIT. Residues 32-52 form a helical membrane-spanning segment; that stretch reads TVVLPTLAVVVLLIVVFVYVA.

It belongs to the SMCO4 family.

The protein localises to the membrane. This is Single-pass membrane and coiled-coil domain-containing protein 4 (SMCO4) from Bos taurus (Bovine).